The primary structure comprises 141 residues: Hemoglobin subunit alpha (141 aa).

The Globin domain occupies 1–141 (VLSSADKNNI…VSTVLTSKYR (141 aa)). A Phosphoserine modification is found at Ser3. N6-succinyllysine occurs at positions 7 and 11. Lys16 bears the N6-acetyllysine; alternate mark. Lys16 carries the N6-succinyllysine; alternate modification. The residue at position 24 (Tyr24) is a Phosphotyrosine. Position 35 is a phosphoserine (Ser35). Residue Lys40 is modified to N6-succinyllysine. Ser49 carries the post-translational modification Phosphoserine. His58 serves as a coordination point for O2. His87 is a heme b binding site. At Ser102 the chain carries Phosphoserine. A phosphothreonine mark is found at Thr108, Thr134, and Thr137. The residue at position 138 (Ser138) is a Phosphoserine.

The protein belongs to the globin family. As to quaternary structure, heterotetramer of two alpha chains and two beta chains. Red blood cells.

Involved in oxygen transport from the lung to the various peripheral tissues. Its function is as follows. Hemopressin acts as an antagonist peptide of the cannabinoid receptor CNR1. Hemopressin-binding efficiently blocks cannabinoid receptor CNR1 and subsequent signaling. In Paguma larvata (Masked palm civet), this protein is Hemoglobin subunit alpha (HBA).